The following is a 253-amino-acid chain: 3-deoxy-manno-octulosonate cytidylyltransferase (253 aa).

It belongs to the KdsB family.

It localises to the cytoplasm. The enzyme catalyses 3-deoxy-alpha-D-manno-oct-2-ulosonate + CTP = CMP-3-deoxy-beta-D-manno-octulosonate + diphosphate. It functions in the pathway nucleotide-sugar biosynthesis; CMP-3-deoxy-D-manno-octulosonate biosynthesis; CMP-3-deoxy-D-manno-octulosonate from 3-deoxy-D-manno-octulosonate and CTP: step 1/1. Its pathway is bacterial outer membrane biogenesis; lipopolysaccharide biosynthesis. Activates KDO (a required 8-carbon sugar) for incorporation into bacterial lipopolysaccharide in Gram-negative bacteria. The chain is 3-deoxy-manno-octulosonate cytidylyltransferase from Edwardsiella ictaluri (strain 93-146).